Consider the following 417-residue polypeptide: D-galactonate dehydratase family member SeV_A0456 (417 aa).

Gln-43 and His-127 together coordinate substrate. Tyr-158 serves as the catalytic Proton donor/acceptor. Asp-223 contacts Mg(2+). Catalysis depends on His-225, which acts as the Proton donor/acceptor. 2 residues coordinate Mg(2+): Glu-249 and Glu-275. Residues Glu-275, Arg-296, His-325, Asp-329, and Glu-352 each contribute to the substrate site.

The protein belongs to the mandelate racemase/muconate lactonizing enzyme family. GalD subfamily. Mg(2+) serves as cofactor.

It catalyses the reaction D-gluconate = 2-dehydro-3-deoxy-D-gluconate + H2O. In terms of biological role, has low D-gluconate dehydratase activity (in vitro), suggesting that it has no significant role in D-gluconate degradation in vivo. Has no detectable activity with a panel of 70 other acid sugars (in vitro). This is D-galactonate dehydratase family member SeV_A0456 from Salmonella virchow (strain SL491).